We begin with the raw amino-acid sequence, 49 residues long: Large ribosomal subunit protein bL33A (49 aa).

This sequence belongs to the bacterial ribosomal protein bL33 family.

The polypeptide is Large ribosomal subunit protein bL33A (Bacillus licheniformis (strain ATCC 14580 / DSM 13 / JCM 2505 / CCUG 7422 / NBRC 12200 / NCIMB 9375 / NCTC 10341 / NRRL NRS-1264 / Gibson 46)).